Reading from the N-terminus, the 266-residue chain is ATP synthase subunit a (266 aa).

Transmembrane regions (helical) follow at residues 38 to 58 (KQML…LLAA), 99 to 119 (LLFS…IPLI), 126 to 146 (HVGG…AIGV), 162 to 182 (GVPV…NFLV), 191 to 211 (LFAT…GIEY), and 224 to 244 (SVLV…IMAL).

It belongs to the ATPase A chain family. In terms of assembly, F-type ATPases have 2 components, CF(1) - the catalytic core - and CF(0) - the membrane proton channel. CF(1) has five subunits: alpha(3), beta(3), gamma(1), delta(1), epsilon(1). CF(0) has three main subunits: a(1), b(2) and c(9-12). The alpha and beta chains form an alternating ring which encloses part of the gamma chain. CF(1) is attached to CF(0) by a central stalk formed by the gamma and epsilon chains, while a peripheral stalk is formed by the delta and b chains.

Its subcellular location is the cell membrane. Its function is as follows. Key component of the proton channel; it plays a direct role in the translocation of protons across the membrane. The sequence is that of ATP synthase subunit a from Arthrobacter sp. (strain FB24).